The primary structure comprises 85 residues: MAGEWACLLVSLVLLWGAAGSRDGFLLDRNFCRIKCSFLGSNSMCADRCTVLGASAGHCNNYACFCTDLRDRVKIWGDSVRCRKP.

A signal peptide spans 1–20; that stretch reads MAGEWACLLVSLVLLWGAAG. Residues 22–83 form the LCN-type CS-alpha/beta domain; sequence RDGFLLDRNF…KIWGDSVRCR (62 aa). 4 disulfide bridges follow: cysteine 32/cysteine 82, cysteine 36/cysteine 59, cysteine 45/cysteine 64, and cysteine 49/cysteine 66.

The protein belongs to the long (4 C-C) scorpion toxin superfamily. Sodium channel inhibitor family. Expressed by the venom gland.

The protein resides in the secreted. Putative sodium channel toxin. This Tityus serrulatus (Brazilian scorpion) protein is Putative sodium channel toxin Ts37.